Consider the following 116-residue polypeptide: Ribulose bisphosphate carboxylase small subunit 1 (116 aa).

The protein belongs to the RuBisCO small chain family. As to quaternary structure, heterohexadecamer of 8 large and 8 small subunits.

It localises to the cytoplasm. In terms of biological role, ruBisCO catalyzes two reactions: the carboxylation of D-ribulose 1,5-bisphosphate, the primary event in carbon dioxide fixation, as well as the oxidative fragmentation of the pentose substrate. Both reactions occur simultaneously and in competition at the same active site. Although the small subunit is not catalytic it is essential for maximal activity. Can replace the endogenous type I ccbS gene in H.neapolitanus, reconstituting RuBisCO with about 10% of normal activity; the active enzyme is targeted to carboxysomes. The protein is Ribulose bisphosphate carboxylase small subunit 1 of Hydrogenovibrio crunogenus (strain DSM 25203 / XCL-2) (Thiomicrospira crunogena).